The sequence spans 95 residues: Small ribosomal subunit protein bS18 (95 aa).

The protein belongs to the bacterial ribosomal protein bS18 family. In terms of assembly, part of the 30S ribosomal subunit. Forms a tight heterodimer with protein bS6.

In terms of biological role, binds as a heterodimer with protein bS6 to the central domain of the 16S rRNA, where it helps stabilize the platform of the 30S subunit. This is Small ribosomal subunit protein bS18 from Rickettsia felis (strain ATCC VR-1525 / URRWXCal2) (Rickettsia azadi).